Here is a 486-residue protein sequence, read N- to C-terminus: Beta-barrel assembly-enhancing protease (486 aa).

Residues 1-19 (MIATLLSSLLLTGPISAGA) form the signal peptide. His-134 serves as a coordination point for Zn(2+). Glu-135 is an active-site residue. Zn(2+)-binding residues include His-138 and Glu-199. Asp-203 serves as the catalytic Proton donor.

This sequence belongs to the peptidase M48 family. BepA subfamily. Zn(2+) serves as cofactor.

Its subcellular location is the periplasm. In terms of biological role, functions both as a chaperone and a metalloprotease. Maintains the integrity of the outer membrane by promoting either the assembly or the elimination of outer membrane proteins, depending on their folding state. This chain is Beta-barrel assembly-enhancing protease, found in Yersinia pestis.